Here is a 565-residue protein sequence, read N- to C-terminus: Bicyclogermacrene synthase (565 aa).

Mg(2+) contacts are provided by D317, D321, D461, and E469. The DDXXD motif motif lies at 317-321 (DDTFD).

This sequence belongs to the terpene synthase family. The cofactor is Mg(2+).

The enzyme catalyses (2E,6E)-farnesyl diphosphate = bicyclogermacrene + diphosphate. It participates in secondary metabolite biosynthesis; terpenoid biosynthesis. Sesquiterpene synthase converting farnesyl diphosphate to bicyclogermacrene as the major product. In Phyla dulcis (Aztec sweet herb), this protein is Bicyclogermacrene synthase.